Here is a 1151-residue protein sequence, read N- to C-terminus: Syntaxin-binding protein 5 (1151 aa).

A disordered region spans residues 14 to 34 (TAGSSSASQQQQQQHPPGNRE). The span at 17–27 (SSSASQQQQQQ) shows a compositional bias: low complexity. WD repeat units follow at residues 61 to 94 (SALAFDPVQKILAVGTQTGALRLFGRPGVECYCQ), 101 to 140 (VIQLQFLINEGALVSALADDTLHLWNLRQKRPAILHSLKF), 145 to 181 (VTFCHLPFQSKWLYVGTERGNIHIVNVESFTLSGYVI), 200 to 234 (HISDNPMDEGKLLIGFESGTVVLWDLKSKKADYRY), 240 to 272 (IHSVAWHHEGKQFICSHSDGTLTIWNVRSPAKP), 294 to 336 (PILK…KSTA), 344 to 378 (IVDFLTLCETPYPNDFQEPYAVVVLLEKDLVLIDL), 400 to 477 (TCCE…YKLK), 505 to 619 (QIIS…ELVI), and 633 to 695 (TSLA…SGAG). 2 disordered regions span residues 555–595 (ETPE…GLRD) and 674–729 (SNDP…EQKM). A Phosphoserine modification is found at Ser692. Residues 712–721 (SPTSGSSSPH) show a composition bias toward low complexity. Ser723 is subject to Phosphoserine; by PKA. Ser759 carries the post-translational modification Phosphoserine. A Phosphothreonine modification is found at Thr762. Ser782 is modified (phosphoserine). Phosphothreonine is present on Thr784. Residue Ser785 is modified to Phosphoserine. WD repeat units lie at residues 794 to 851 (ISAL…SGTI), 860 to 934 (RMAF…QNCA), 939 to 983 (ITET…LDVY), and 997 to 1020 (CFTNNGQALYLVSPTEIQRLTYSQ). Residues 881-892 (HNVPEEKDEKEK) show a composition bias toward basic and acidic residues. Residues 881–906 (HNVPEEKDEKEKLKKRRPVSVSPSSS) form a disordered region. Residues Ser900 and Ser902 each carry the phosphoserine modification. Thr1039 bears the Phosphothreonine mark. Ser1058 and Ser1131 each carry phosphoserine. The v-SNARE coiled-coil homology domain maps to 1086–1146 (GIEGVKGAAS…HEIMLKYKDK (61 aa)).

It belongs to the WD repeat L(2)GL family. In terms of assembly, interacts with STX1A and STX1B via its v-SNARE homology domain. Part of a complex that contains STX1, STXBP5, SNAP25 and SYT1. Part of a complex that contains STXBP5, STX4A and SNAP23.

Its subcellular location is the cytoplasm. It localises to the cell membrane. The protein resides in the cytoplasmic vesicle membrane. The protein localises to the cytoplasmic vesicle. It is found in the secretory vesicle. Its subcellular location is the synaptic vesicle. It localises to the synapse. Its function is as follows. Plays a regulatory role in calcium-dependent exocytosis and neurotransmitter release. Inhibits membrane fusion between transport vesicles and the plasma membrane. May modulate the assembly of trans-SNARE complexes between transport vesicles and the plasma membrane. Inhibits translocation of GLUT4 from intracellular vesicles to the plasma membrane. Competes with STXBP1 for STX1 binding. This Homo sapiens (Human) protein is Syntaxin-binding protein 5 (STXBP5).